Here is a 525-residue protein sequence, read N- to C-terminus: Probable malate:quinone oxidoreductase (525 aa).

This sequence belongs to the MQO family. FAD serves as cofactor.

The enzyme catalyses (S)-malate + a quinone = a quinol + oxaloacetate. It participates in carbohydrate metabolism; tricarboxylic acid cycle; oxaloacetate from (S)-malate (quinone route): step 1/1. The chain is Probable malate:quinone oxidoreductase from Serratia proteamaculans (strain 568).